The chain runs to 214 residues: Glucose-6-phosphate isomerase (214 aa).

Positions 92, 94, 101, and 140 each coordinate Fe cation.

This sequence belongs to the archaeal-type GPI family. As to quaternary structure, homodimer.

It localises to the cytoplasm. The enzyme catalyses alpha-D-glucose 6-phosphate = beta-D-fructose 6-phosphate. It participates in carbohydrate degradation; glycolysis; D-glyceraldehyde 3-phosphate and glycerone phosphate from D-glucose: step 2/4. The sequence is that of Glucose-6-phosphate isomerase from Sinorhizobium medicae (strain WSM419) (Ensifer medicae).